The primary structure comprises 275 residues: Large ribosomal subunit protein uL2 (275 aa).

A disordered region spans residues 210–275 (GRNRHRGIRP…DKLIISRKKK (66 aa)). Positions 257-275 (FKTRKKKASDKLIISRKKK) are enriched in basic residues.

It belongs to the universal ribosomal protein uL2 family. In terms of assembly, part of the 50S ribosomal subunit. Forms a bridge to the 30S subunit in the 70S ribosome.

In terms of biological role, one of the primary rRNA binding proteins. Required for association of the 30S and 50S subunits to form the 70S ribosome, for tRNA binding and peptide bond formation. It has been suggested to have peptidyltransferase activity; this is somewhat controversial. Makes several contacts with the 16S rRNA in the 70S ribosome. This is Large ribosomal subunit protein uL2 from Helicobacter hepaticus (strain ATCC 51449 / 3B1).